The following is a 132-amino-acid chain: MSAIDSAAVLAKIKFNADGLVPAIAQQHDTGEVLMMAWMNAESVAETLATGRVCYFSRSRGGLWRKGETSGQQQRLKDFLIDCDGDTILLKVDQDGVACHTGRRTCFYTAARPEGLTEVAKVQVSPDELYKK.

Asp82 serves as a coordination point for Mg(2+). Cys83 is a Zn(2+) binding site. Mg(2+)-binding residues include Asp84 and Asp86. Zn(2+) is bound by residues Cys99 and Cys106.

The protein belongs to the PRA-CH family. As to quaternary structure, homodimer. It depends on Mg(2+) as a cofactor. Zn(2+) serves as cofactor.

It is found in the cytoplasm. It catalyses the reaction 1-(5-phospho-beta-D-ribosyl)-5'-AMP + H2O = 1-(5-phospho-beta-D-ribosyl)-5-[(5-phospho-beta-D-ribosylamino)methylideneamino]imidazole-4-carboxamide. It functions in the pathway amino-acid biosynthesis; L-histidine biosynthesis; L-histidine from 5-phospho-alpha-D-ribose 1-diphosphate: step 3/9. Functionally, catalyzes the hydrolysis of the adenine ring of phosphoribosyl-AMP. The protein is Phosphoribosyl-AMP cyclohydrolase of Paramagnetospirillum magneticum (strain ATCC 700264 / AMB-1) (Magnetospirillum magneticum).